The chain runs to 549 residues: Chaperonin GroEL (549 aa).

ATP is bound by residues threonine 29–proline 32, lysine 50, aspartate 86–threonine 90, glycine 417, and aspartate 499.

The protein belongs to the chaperonin (HSP60) family. In terms of assembly, forms a cylinder of 14 subunits composed of two heptameric rings stacked back-to-back. Interacts with the co-chaperonin GroES.

The protein resides in the cytoplasm. The catalysed reaction is ATP + H2O + a folded polypeptide = ADP + phosphate + an unfolded polypeptide.. Together with its co-chaperonin GroES, plays an essential role in assisting protein folding. The GroEL-GroES system forms a nano-cage that allows encapsulation of the non-native substrate proteins and provides a physical environment optimized to promote and accelerate protein folding. This chain is Chaperonin GroEL, found in Anaplasma marginale (strain Florida).